A 314-amino-acid chain; its full sequence is 2-dehydro-3-deoxygluconokinase (314 aa).

Substrate is bound by residues 28-32, tyrosine 88, 102-104, and arginine 170; these read GDTLN and YWR. ATP-binding positions include 168 to 170, 228 to 233, and 260 to 263; these read NYR, KCGKNG, and SAGD. Aspartate 263 is a substrate binding site. Aspartate 263 serves as the catalytic Proton acceptor.

This sequence belongs to the carbohydrate kinase PfkB family.

It catalyses the reaction 2-dehydro-3-deoxy-D-gluconate + ATP = 2-dehydro-3-deoxy-6-phospho-D-gluconate + ADP + H(+). The protein operates within carbohydrate acid metabolism; 2-dehydro-3-deoxy-D-gluconate degradation; D-glyceraldehyde 3-phosphate and pyruvate from 2-dehydro-3-deoxy-D-gluconate: step 1/2. Functionally, catalyzes the phosphorylation of 2-keto-3-deoxygluconate (KDG) to produce 2-keto-3-deoxy-6-phosphogluconate (KDPG). This is 2-dehydro-3-deoxygluconokinase (kdgK) from Haemophilus influenzae (strain ATCC 51907 / DSM 11121 / KW20 / Rd).